The following is a 394-amino-acid chain: Mitogen-activated protein kinase 2 (394 aa).

The span at 1–10 (MDGPAQQTDT) shows a compositional bias: polar residues. The disordered stretch occupies residues 1–27 (MDGPAQQTDTVMAEAAAAQQPAPPSQP). Residues 61-346 (KPPIMPIGKG…VEDALAHPYL (286 aa)) form the Protein kinase domain. ATP-binding positions include 67-75 (IGKGAYGIV) and Lys-90. Residue Asp-187 is the Proton acceptor of the active site. Phosphothreonine is present on Thr-219. Residues 219 to 221 (TEY) carry the TXY motif. Phosphotyrosine is present on Tyr-221. At Thr-224 the chain carries Phosphothreonine.

This sequence belongs to the protein kinase superfamily. CMGC Ser/Thr protein kinase family. MAP kinase subfamily. Requires Mg(2+) as cofactor. Activated by cold, wounding and UV-C in a cultivar-dependent manner; phosphorylated at Tyr-221 in cv. Subicho but not in cv. Pungchon. Expressed constitutively in roots, stems, flowers and fruits of the hot pepper (cv. Subicho).

The catalysed reaction is L-seryl-[protein] + ATP = O-phospho-L-seryl-[protein] + ADP + H(+). It carries out the reaction L-threonyl-[protein] + ATP = O-phospho-L-threonyl-[protein] + ADP + H(+). Its activity is regulated as follows. Activated by threonine and tyrosine phosphorylation. Protein kinase involved in oxidative stress-mediated and innate immune MAP kinase signaling cascades. The sequence is that of Mitogen-activated protein kinase 2 from Capsicum annuum (Capsicum pepper).